A 418-amino-acid chain; its full sequence is Mitochondrial distribution and morphology protein 10 (418 aa).

The protein belongs to the MDM10 family. In terms of assembly, component of the ER-mitochondria encounter structure (ERMES) or MDM complex, composed of MMM1, MDM10, MDM12 and MDM34. Associates with the mitochondrial outer membrane sorting assembly machinery SAM(core) complex.

Its subcellular location is the mitochondrion outer membrane. Component of the ERMES/MDM complex, which serves as a molecular tether to connect the endoplasmic reticulum and mitochondria. Components of this complex are involved in the control of mitochondrial shape and protein biogenesis and may function in phospholipid exchange. MDM10 is involved in the late assembly steps of the general translocase of the mitochondrial outer membrane (TOM complex). Functions in the TOM40-specific route of the assembly of outer membrane beta-barrel proteins, including the association of TOM40 with the receptor TOM22 and small TOM proteins. Can associate with the SAM(core) complex as well as the MDM12-MMM1 complex, both involved in late steps of the major beta-barrel assembly pathway, that is responsible for biogenesis of all outer membrane beta-barrel proteins. May act as a switch that shuttles between both complexes and channels precursor proteins into the TOM40-specific pathway. Plays a role in mitochondrial morphology and in the inheritance of mitochondria. The sequence is that of Mitochondrial distribution and morphology protein 10 from Meyerozyma guilliermondii (strain ATCC 6260 / CBS 566 / DSM 6381 / JCM 1539 / NBRC 10279 / NRRL Y-324) (Yeast).